Here is a 126-residue protein sequence, read N- to C-terminus: Non-specific lipid-transfer protein 15 (126 aa).

Residues 1-22 (MSKSIFVVCITLLVVLSPTLNA) form the signal peptide. 4 disulfide bridges follow: C34–C80, C45–C57, C58–C100, and C78–C114.

This sequence belongs to the plant LTP family.

Functionally, plant non-specific lipid-transfer proteins transfer phospholipids as well as galactolipids across membranes. May play a role in wax or cutin deposition in the cell walls of expanding epidermal cells and certain secretory tissues. The sequence is that of Non-specific lipid-transfer protein 15 (LTP15) from Arabidopsis thaliana (Mouse-ear cress).